A 564-amino-acid chain; its full sequence is Dihydroxy-acid dehydratase 2 (564 aa).

Cys-59 serves as a coordination point for [2Fe-2S] cluster. Position 91 (Asp-91) interacts with Mg(2+). Position 132 (Cys-132) interacts with [2Fe-2S] cluster. Residues Asp-133 and Lys-134 each contribute to the Mg(2+) site. Lys-134 bears the N6-carboxylysine mark. Cys-204 serves as a coordination point for [2Fe-2S] cluster. Position 454 (Glu-454) interacts with Mg(2+). The active-site Proton acceptor is Ser-480.

This sequence belongs to the IlvD/Edd family. Homodimer. [2Fe-2S] cluster serves as cofactor. It depends on Mg(2+) as a cofactor.

The catalysed reaction is (2R)-2,3-dihydroxy-3-methylbutanoate = 3-methyl-2-oxobutanoate + H2O. It catalyses the reaction (2R,3R)-2,3-dihydroxy-3-methylpentanoate = (S)-3-methyl-2-oxopentanoate + H2O. Its pathway is amino-acid biosynthesis; L-isoleucine biosynthesis; L-isoleucine from 2-oxobutanoate: step 3/4. It participates in amino-acid biosynthesis; L-valine biosynthesis; L-valine from pyruvate: step 3/4. In terms of biological role, functions in the biosynthesis of branched-chain amino acids. Catalyzes the dehydration of (2R,3R)-2,3-dihydroxy-3-methylpentanoate (2,3-dihydroxy-3-methylvalerate) into 2-oxo-3-methylpentanoate (2-oxo-3-methylvalerate) and of (2R)-2,3-dihydroxy-3-methylbutanoate (2,3-dihydroxyisovalerate) into 2-oxo-3-methylbutanoate (2-oxoisovalerate), the penultimate precursor to L-isoleucine and L-valine, respectively. This is Dihydroxy-acid dehydratase 2 from Staphylococcus saprophyticus subsp. saprophyticus (strain ATCC 15305 / DSM 20229 / NCIMB 8711 / NCTC 7292 / S-41).